A 169-amino-acid polypeptide reads, in one-letter code: Myosin regulatory light chain 11 (169 aa).

A N,N,N-trimethylalanine modification is found at A2. A phosphoserine mark is found at S15 and S16. 2 positions are modified to phosphothreonine: T25 and T35. The EF-hand 1 domain occupies 25 to 60 (TQIQEFKEAFTVIDQNRDGIIDKEDLRDTFAAMGRL). Residues D38, N40, D42, and D49 each coordinate Ca(2+). S75 carries the post-translational modification Phosphoserine. EF-hand domains are found at residues 95–130 (DPED…QCDR) and 131–166 (FSQE…GDAK). Position 101 is a phosphothreonine (T101).

In terms of assembly, myosin is a hexamer of 2 heavy chains and 4 light chains.

In terms of biological role, myosin regulatory subunit that plays an essential to maintain muscle integrity during early development. Plays a role in muscle contraction. This Rattus norvegicus (Rat) protein is Myosin regulatory light chain 11 (Myl11).